The following is a 200-amino-acid chain: Outer-membrane lipoprotein LolB (200 aa).

A signal peptide spans 1–18; it reads MRRGRLLIAGLAALVLSA. Cysteine 19 is lipidated: N-palmitoyl cysteine. Cysteine 19 is lipidated: S-diacylglycerol cysteine.

The protein belongs to the LolB family. Monomer.

It is found in the cell outer membrane. Functionally, plays a critical role in the incorporation of lipoproteins in the outer membrane after they are released by the LolA protein. The sequence is that of Outer-membrane lipoprotein LolB from Alkalilimnicola ehrlichii (strain ATCC BAA-1101 / DSM 17681 / MLHE-1).